Reading from the N-terminus, the 335-residue chain is Large ribosomal subunit protein uL3 (335 aa).

Residues 1–20 (MATIHRPRRGSLAFSPRKRA) form a disordered region.

It belongs to the universal ribosomal protein uL3 family. Part of the 50S ribosomal subunit. Forms a cluster with proteins L14 and L24e.

Functionally, one of the primary rRNA binding proteins, it binds directly near the 3'-end of the 23S rRNA, where it nucleates assembly of the 50S subunit. This Methanothrix harundinacea (strain 6Ac) (Methanosaeta harundinacea) protein is Large ribosomal subunit protein uL3 (rpl3).